A 134-amino-acid chain; its full sequence is UPF0412 protein YaaI (134 aa).

The signal sequence occupies residues 1 to 23 (MRSVLTISVGLLFGLALSSVAHA).

The protein belongs to the UPF0412 family.

In Salmonella typhimurium (strain LT2 / SGSC1412 / ATCC 700720), this protein is UPF0412 protein YaaI.